The sequence spans 345 residues: Alpha-N-acetylneuraminide alpha-2,8-sialyltransferase (345 aa).

At 1 to 15 (MKLQGSRMWLCPRTR) the chain is on the cytoplasmic side. Residues 16–36 (LPVGASALGFLILCWLYVFPG) form a helical; Signal-anchor for type II membrane protein membrane-spanning segment. Residues 37–345 (YRLPGHKEMV…KKDVSSQKPH (309 aa)) are Lumenal-facing. N-linked (GlcNAc...) asparagine glycans are attached at residues N59 and N107. 2 cysteine pairs are disulfide-bonded: C126-C275 and C140-C335. Residues N131 and N154 each contribute to the CMP-N-acetyl-beta-neuraminate site. Substrate-binding positions include N154 and 176-178 (NPS). The N-linked (GlcNAc...) asparagine glycan is linked to N233. CMP-N-acetyl-beta-neuraminate is bound by residues S262, T263, G264, W284, and H298. Residue 262-264 (STG) participates in substrate binding. The active-site Proton donor/acceptor is H310.

Belongs to the glycosyltransferase 29 family.

It is found in the golgi apparatus membrane. It carries out the reaction an N-acetyl-alpha-neuraminyl-(2-&gt;3)-beta-D-galactosyl derivative + CMP-N-acetyl-beta-neuraminate = an N-acetyl-alpha-neuraminyl-(2-&gt;8)-N-acetyl-alpha-neuraminyl-(2-&gt;3)-beta-D-galactosyl derivative + CMP + H(+). The enzyme catalyses a ganglioside GM3 (d18:1(4E)) + CMP-N-acetyl-beta-neuraminate = a ganglioside GD3 (d18:1(4E)) + CMP + H(+). It catalyses the reaction a ganglioside GD3 (d18:1(4E)) + CMP-N-acetyl-beta-neuraminate = a ganglioside GT3 (d18:1(4E)) + CMP + H(+). The catalysed reaction is a ganglioside GD1a (d18:1(4E)) + CMP-N-acetyl-beta-neuraminate = a ganglioside GT1a (d18:1(4E)) + CMP + H(+). It carries out the reaction a ganglioside GT1b (d18:1(4E)) + CMP-N-acetyl-beta-neuraminate = a ganglioside GQ1b (d18:1(4E)) + CMP + H(+). The enzyme catalyses a ganglioside GM1b (d18:1(4E)) + CMP-N-acetyl-beta-neuraminate = a ganglioside GD1c (d18:1(4E)) + CMP + H(+). It catalyses the reaction a ganglioside GD3 + CMP-N-acetyl-beta-neuraminate = a ganglioside GT3 + CMP + H(+). The catalysed reaction is [alpha-N-acetylneuraminyl-(2-&gt;8)](n)-alpha-N-acetylneuraminyl-(2-&gt;8)-alpha-N-acetylneuraminyl-(2-&gt;3)-beta-D-galactosyl-(1-&gt;4)-beta-D-glucosyl-(1&lt;-&gt;1)-ceramide + CMP-N-acetyl-beta-neuraminate = [alpha-N-acetylneuraminyl-(2-&gt;8)](n+1)-alpha-N-acetylneuraminyl-(2-&gt;8)-alpha-N-acetylneuraminyl-(2-&gt;3)-beta-D-galactosyl-(1-&gt;4)-beta-D-glucosyl-(1&lt;-&gt;1)-ceramide + CMP + H(+). Its pathway is protein modification; protein glycosylation. It participates in lipid metabolism; sphingolipid metabolism. Catalyzes the addition of sialic acid in alpha 2,8-linkage to the sialic acid moiety of the ganglioside GM3 to form ganglioside GD3; gangliosides are a subfamily of complex glycosphingolipds that contain one or more residues of sialic acid. Glycosphingolipids are required for convergence extension movements during early development. Can catalyze the addition of a second alpha-2,8- sialic acid to GD3 to form GT3. Can use GM1b, GD1a and GT1b as acceptor substrates to synthesize GD1c, GT1a and GQ1b respectively. The protein is Alpha-N-acetylneuraminide alpha-2,8-sialyltransferase of Xenopus tropicalis (Western clawed frog).